The following is a 403-amino-acid chain: MTPFLRILNRTSLVTQIVIGLLAGIALALLAPAIARDLAFLGKVFVSALKAVAPVLVFILVMASVANHRHGQETHIRPILWLYLLGTFAAAVVAVFASMLFPSHLALSTSEATLSAPGGIAEVLQNLLLNAVDNPVNALLNANFIGVLTWAIGLGVALRHAGETTRTVVEDLSNGVTLIVRVVIRFAPLGIFGLVSSTLAQSGLDALLGYLHLLAVLIGCMLFVALVMNPLIVFWKIRRNPYPLTLLCLRESGITAFFTRSSAANIPVNLALSERLGLHEDTYSVSIPLGATINMAGAAITITVLTLAAVHTLGIQVDLPTAVLLSVVAAVCACGASGVAGGSLLLIPLACSLFGIPSEIAMQVVAVGFIIGVLQDSAETALNSSTDVLFTAAACQAQEQRHG.

Transmembrane regions (helical) follow at residues 14 to 34 (VTQI…APAI), 44 to 64 (VFVS…VMAS), 79 to 99 (ILWL…FASM), 138 to 158 (ALLN…GVAL), 175 to 195 (GVTL…FGLV), 214 to 234 (LAVL…LIVF), 295 to 315 (MAGA…TLGI), 327 to 347 (VVAA…LLLI), and 353 to 373 (LFGI…IIGV).

This sequence belongs to the dicarboxylate/amino acid:cation symporter (DAACS) (TC 2.A.23) family.

Its subcellular location is the cell inner membrane. The enzyme catalyses L-serine(in) + Na(+)(in) = L-serine(out) + Na(+)(out). It catalyses the reaction L-threonine(in) + Na(+)(in) = L-threonine(out) + Na(+)(out). In terms of biological role, involved in the import of serine and threonine into the cell, with the concomitant import of sodium (symport system). The chain is Serine/threonine transporter SstT from Pseudomonas putida (strain ATCC 47054 / DSM 6125 / CFBP 8728 / NCIMB 11950 / KT2440).